Reading from the N-terminus, the 101-residue chain is CLAVATA3/ESR (CLE)-related protein 18 (101 aa).

An N-terminal signal peptide occupies residues 1-25; sequence MHLLKGGVVLIITLILFLITSSIVA. The tract at residues 37–58 is disordered; the sequence is RQIPTGPDPLHNPPQPSPKHHH. 2 positions are modified to hydroxyproline: P40 and P43. Residues 42-53 show a composition bias toward pro residues; the sequence is GPDPLHNPPQPS. The O-linked (Ara...) hydroxyproline glycan is linked to P43. Position 76 is a sulfotyrosine (Y76). P84 is subject to Hydroxyproline.

Belongs to the CLV3/ESR signal peptide family. Post-translationally, the tyrosine sulfation is critical for the function of the peptide. In terms of processing, the O-glycosylation (arabinosylation) of the hydroxyproline Pro-43 enhances binding affinity of the CLE18p peptide for its receptor. In terms of tissue distribution, expressed in roots, leaves, siliques and seedlings.

The protein localises to the secreted. It is found in the extracellular space. Root growth factor that regulates the pattern of root growth and lateral root development by modulating the length and the number of cortical cells in the root apical meristem (RAM), and the anticlinal asymmetric cell divisions in lateral root initiation cells. Functionally, extracellular signal peptide that regulates cell fate. Represses root apical meristem maintenance. Root growth factor that regulates the pattern of root growth and lateral root development. Regulates the transition of protophloem cells from proliferation to differentiation, thus impinging on postembryonic growth capacity of the root meristem; this signaling pathway requires CRN and CLV2. The polypeptide is CLAVATA3/ESR (CLE)-related protein 18 (Arabidopsis thaliana (Mouse-ear cress)).